Here is a 182-residue protein sequence, read N- to C-terminus: T-cell surface glycoprotein CD3 gamma chain (182 aa).

An N-terminal signal peptide occupies residues 1-22 (MEQGKGLAGLFLVISLLQGTMA). The Extracellular portion of the chain corresponds to 23 to 116 (QQKEEKHLVK…CIELNMGTVS (94 aa)). An Ig-like domain is found at 37 to 94 (QGDGSVLLTCDFNEKTITWLKDGHRISPPNATKSTWNLGNGAKDPRGMYQCRGAKKKS). A disulfide bond links Cys46 and Cys87. The N-linked (GlcNAc...) asparagine glycan is linked to Asn66. Residues 117–137 (GFIFAEIISIFFLAVGVYFIA) form a helical membrane-spanning segment. Residues 138-182 (GQDGVRQSRASDKQTLLQNEQVYQPLKDREYEQYSRLQGNQVRKK) lie on the Cytoplasmic side of the membrane. Ser145 carries the post-translational modification Phosphoserine. Position 148 is a phosphoserine; by PKC (Ser148). In terms of domain architecture, ITAM spans 149–177 (DKQTLLQNEQVYQPLKDREYEQYSRLQGN). Residues 153 to 154 (LL) carry the Di-leucine motif motif.

As to quaternary structure, the TCR-CD3 complex is composed of a CD3D/CD3E and a CD3G/CD3E heterodimers that preferentially associate with TCRalpha and TCRbeta, respectively, to form TCRalpha/CD3E/CD3G and TCRbeta/CD3G/CD3E trimers. In turn, the hexamer interacts with CD3Z homodimer to form the TCR-CD3 complex. Alternatively, TCRalpha and TCRbeta can be replaced by TCRgamma and TCRdelta. In terms of processing, phosphorylated on Tyr residues after T-cell receptor triggering by LCK in association with CD4/CD8. Phosphorylated also by PKC; leading to the TCR complex down-regulation. Post-translationally, phosphorylated on Tyr residues after T-cell receptor triggering by LCK in association with CD4/CD8.

It localises to the cell membrane. Part of the TCR-CD3 complex present on T-lymphocyte cell surface that plays an essential role in adaptive immune response. When antigen presenting cells (APCs) activate T-cell receptor (TCR), TCR-mediated signals are transmitted across the cell membrane by the CD3 chains CD3D, CD3E, CD3G and CD3Z. All CD3 chains contain immunoreceptor tyrosine-based activation motifs (ITAMs) in their cytoplasmic domain. Upon TCR engagement, these motifs become phosphorylated by Src family protein tyrosine kinases LCK and FYN, resulting in the activation of downstream signaling pathways. In addition to this role of signal transduction in T-cell activation, CD3G plays an essential role in the dynamic regulation of TCR expression at the cell surface. Indeed, constitutive TCR cycling is dependent on the di-leucine-based (diL) receptor-sorting motif present in CD3G. In Rattus norvegicus (Rat), this protein is T-cell surface glycoprotein CD3 gamma chain (Cd3g).